The sequence spans 137 residues: 3-hydroxyacyl-[acyl-carrier-protein] dehydratase FabZ (137 aa).

His-46 is a catalytic residue.

The protein belongs to the thioester dehydratase family. FabZ subfamily.

It is found in the cytoplasm. The catalysed reaction is a (3R)-hydroxyacyl-[ACP] = a (2E)-enoyl-[ACP] + H2O. In terms of biological role, involved in unsaturated fatty acids biosynthesis. Catalyzes the dehydration of short chain beta-hydroxyacyl-ACPs and long chain saturated and unsaturated beta-hydroxyacyl-ACPs. In Thermotoga neapolitana (strain ATCC 49049 / DSM 4359 / NBRC 107923 / NS-E), this protein is 3-hydroxyacyl-[acyl-carrier-protein] dehydratase FabZ.